The following is a 271-amino-acid chain: Putative pirin-like protein At3g59260 (271 aa).

This sequence belongs to the pirin family.

Its subcellular location is the nucleus. This Arabidopsis thaliana (Mouse-ear cress) protein is Putative pirin-like protein At3g59260.